The chain runs to 420 residues: UDP-N-acetylglucosamine 1-carboxyvinyltransferase (420 aa).

Position 22 to 23 (22 to 23 (KN)) interacts with phosphoenolpyruvate. Residue R93 participates in UDP-N-acetyl-alpha-D-glucosamine binding. The Proton donor role is filled by C117. The residue at position 117 (C117) is a 2-(S-cysteinyl)pyruvic acid O-phosphothioketal. The UDP-N-acetyl-alpha-D-glucosamine site is built by D307 and I329.

Belongs to the EPSP synthase family. MurA subfamily.

It is found in the cytoplasm. It catalyses the reaction phosphoenolpyruvate + UDP-N-acetyl-alpha-D-glucosamine = UDP-N-acetyl-3-O-(1-carboxyvinyl)-alpha-D-glucosamine + phosphate. Its pathway is cell wall biogenesis; peptidoglycan biosynthesis. Its function is as follows. Cell wall formation. Adds enolpyruvyl to UDP-N-acetylglucosamine. This chain is UDP-N-acetylglucosamine 1-carboxyvinyltransferase, found in Alcanivorax borkumensis (strain ATCC 700651 / DSM 11573 / NCIMB 13689 / SK2).